The sequence spans 351 residues: MKVCIIGASGFVGGELLRILLQHSGVEVVCATSRRFKGEYVYRVHPNLRGFTQLKFVEPSIDAALKADVVFLALPHGESVKWVPKLYESGVAVFDLSADFRLKDPNAYVEWYKWPQPHPYPDLLQKAVYGQPELHRSELVGAKLVAVPGCMATASILMLAPLAKHGLLGETPPVIDAKIGSSGAGAEGSVVDLHSFRTYVVRPYEPVHHRHIAEIEQELSLLAGKRVKVAFTPHAVDMVRGIFATGHVFVEKMPTEADMWKMYRSMYGDSKFIRIVKDRLGISRYPNVKYVLGSNFVDIGFELDQRLNRLVTFSAIDNLVRGAAGQAVQAFNVAMGFPEDEGLRYIPLAPV.

NADP(+)-binding positions include 9–12 (SGFV) and 33–35 (SRR). Cysteine 150 is a catalytic residue. Asparagine 318 contributes to the NADP(+) binding site.

It belongs to the NAGSA dehydrogenase family. Type 1 subfamily. LysY sub-subfamily.

Its subcellular location is the cytoplasm. It catalyses the reaction [amino-group carrier protein]-C-terminal-N-(1-carboxy-5-oxopentan-1-yl)-L-glutamine + phosphate + NADP(+) = [amino-group carrier protein]-C-terminal-N-(1-carboxy-5-phosphooxy-5-oxopentan-1-yl)-L-glutamine + NADPH + H(+). The catalysed reaction is [amino-group carrier protein]-C-terminal-gamma-(L-glutamyl-5-semialdehyde)-L-glutamate + phosphate + NADP(+) = [amino-group carrier protein]-C-terminal-gamma-(5-phospho-L-glutamyl)-L-glutamate + NADPH + H(+). The protein operates within amino-acid biosynthesis; L-lysine biosynthesis via AAA pathway; L-lysine from L-alpha-aminoadipate (Thermus route): step 3/5. It participates in amino-acid biosynthesis; L-arginine biosynthesis. Its function is as follows. Involved in both the arginine and lysine biosynthetic pathways. The sequence is that of Putative [LysW]-L-2-aminoadipate/[LysW]-L-glutamate phosphate reductase from Pyrobaculum aerophilum (strain ATCC 51768 / DSM 7523 / JCM 9630 / CIP 104966 / NBRC 100827 / IM2).